The chain runs to 265 residues: Protein Pars_0096 (265 aa).

Belongs to the CinA family.

This is Protein Pars_0096 from Pyrobaculum arsenaticum (strain DSM 13514 / JCM 11321 / PZ6).